The sequence spans 465 residues: ATP synthase subunit beta (465 aa).

152-159 (GGAGVGKT) is a binding site for ATP.

Belongs to the ATPase alpha/beta chains family. As to quaternary structure, F-type ATPases have 2 components, CF(1) - the catalytic core - and CF(0) - the membrane proton channel. CF(1) has five subunits: alpha(3), beta(3), gamma(1), delta(1), epsilon(1). CF(0) has three main subunits: a(1), b(2) and c(9-12). The alpha and beta chains form an alternating ring which encloses part of the gamma chain. CF(1) is attached to CF(0) by a central stalk formed by the gamma and epsilon chains, while a peripheral stalk is formed by the delta and b chains.

The protein localises to the cell membrane. It carries out the reaction ATP + H2O + 4 H(+)(in) = ADP + phosphate + 5 H(+)(out). Produces ATP from ADP in the presence of a proton gradient across the membrane. The catalytic sites are hosted primarily by the beta subunits. The sequence is that of ATP synthase subunit beta from Desulfitobacterium hafniense (strain Y51).